The primary structure comprises 197 residues: Transcription factor FapR (197 aa).

This sequence belongs to the FapR family.

Functionally, transcriptional factor involved in regulation of membrane lipid biosynthesis by repressing genes involved in fatty acid and phospholipid metabolism. The protein is Transcription factor FapR of Bacillus anthracis (strain A0248).